The primary structure comprises 570 residues: Putative ABC transporter ATP-binding protein SAR2766 (570 aa).

ABC transporter domains are found at residues 6–247 (ISFK…GIRE) and 304–537 (LELN…ASLR). ATP contacts are provided by residues 40–47 (GASGSGKS) and 338–345 (GHNGAGKS).

Belongs to the ABC transporter superfamily.

The protein localises to the cell membrane. Its function is as follows. Probably part of an ABC transporter complex. Responsible for energy coupling to the transport system. The sequence is that of Putative ABC transporter ATP-binding protein SAR2766 from Staphylococcus aureus (strain MRSA252).